A 296-amino-acid polypeptide reads, in one-letter code: MNLKSPLFLRLSDRLDVYIRLMRADKPIGTLLLLWPTYWALWLASDGIPDLAVLAAFTIGTFLMRSAGCVINDFADRDFDGAVERTKNRPFAQGRVKKKEALLLTAFLCLLAALCLIPLNHLTWLMSLPALFLALTYPFTKRFFPIPQFYLGFAFSFGIPMAFAAVGNSVPVEAWILFAANVLWTLAYDTVYAMADKEDDLKIGIKTSAVTFGRYDIAAVMLCHGGFTLLMAVLGAVIGAAWAYWTAIPIVLLLQYRQYAAIKSRVRQICFETFLANNRIGWVWFAAIFAHTFFAK.

A run of 8 helical transmembrane segments spans residues Ile-28 to Ile-48, Leu-51 to Ile-71, Leu-102 to Leu-122, Phe-143 to Phe-163, Ala-174 to Met-194, Phe-212 to Ala-232, Val-233 to Leu-253, and Phe-274 to Phe-294.

It belongs to the UbiA prenyltransferase family. Requires Mg(2+) as cofactor.

The protein resides in the cell inner membrane. The catalysed reaction is all-trans-octaprenyl diphosphate + 4-hydroxybenzoate = 4-hydroxy-3-(all-trans-octaprenyl)benzoate + diphosphate. It participates in cofactor biosynthesis; ubiquinone biosynthesis. In terms of biological role, catalyzes the prenylation of para-hydroxybenzoate (PHB) with an all-trans polyprenyl group. Mediates the second step in the final reaction sequence of ubiquinone-8 (UQ-8) biosynthesis, which is the condensation of the polyisoprenoid side chain with PHB, generating the first membrane-bound Q intermediate 3-octaprenyl-4-hydroxybenzoate. This chain is 4-hydroxybenzoate octaprenyltransferase, found in Neisseria gonorrhoeae (strain ATCC 700825 / FA 1090).